The chain runs to 230 residues: Cytidylate kinase (230 aa).

An ATP-binding site is contributed by 17–25 (GPTASGKGT).

This sequence belongs to the cytidylate kinase family. Type 1 subfamily.

It localises to the cytoplasm. The enzyme catalyses CMP + ATP = CDP + ADP. The catalysed reaction is dCMP + ATP = dCDP + ADP. This is Cytidylate kinase from Ralstonia nicotianae (strain ATCC BAA-1114 / GMI1000) (Ralstonia solanacearum).